Consider the following 122-residue polypeptide: Large ribosomal subunit protein uL14 (122 aa).

This sequence belongs to the universal ribosomal protein uL14 family. Part of the 50S ribosomal subunit. Forms a cluster with proteins L3 and L19. In the 70S ribosome, L14 and L19 interact and together make contacts with the 16S rRNA in bridges B5 and B8.

Functionally, binds to 23S rRNA. Forms part of two intersubunit bridges in the 70S ribosome. In Shewanella woodyi (strain ATCC 51908 / MS32), this protein is Large ribosomal subunit protein uL14.